The chain runs to 339 residues: Undifferentiated embryonic cell transcription factor 1 (339 aa).

Disordered regions lie at residues 1 to 62 and 144 to 270; these read MLLR…QRTP and MGLL…QVAP. Residues S15, S18, S48, and S54 each carry the phosphoserine modification. Basic residues predominate over residues 154 to 170; that stretch reads RVRRRSTGPGRPQRRGR. 2 stretches are compositionally biased toward low complexity: residues 171–193 and 218–229; these read SSLS…PLAA and TSSPPLTSTDTL. Positions 261 to 270 are enriched in polar residues; sequence GRASSPQVAP. Positions 279–310 are leucine-zipper; the sequence is QTLTHLGDISTVLGPLRDQLSTLNQHVEHLRG.

Binds to the N-terminal region of ATF2. Associates with the TFIID complex through interaction with TBP. Phosphorylated. As to expression, expressed mainly in pluripotent cells with expression rapidly down-regulated upon cell differentiation.

Its subcellular location is the nucleus. Its function is as follows. Acts as a transcriptional coactivator of ATF2. In Mus musculus (Mouse), this protein is Undifferentiated embryonic cell transcription factor 1.